Consider the following 104-residue polypeptide: Secreted RxLR effector protein 54 (104 aa).

An N-terminal signal peptide occupies residues 1 to 19 (MIFTLLGLALVATKSACIA). The RxLR signature appears at 52 to 55 (RSLR). The N-linked (GlcNAc...) asparagine glycan is linked to Asn64.

Belongs to the RxLR effector family.

Its subcellular location is the secreted. It is found in the host chloroplast envelope. It localises to the host mitochondrion. The protein localises to the host nucleus. The protein resides in the host cytoplasm. Functionally, secreted effector that completely suppresses the host cell death induced by cell death-inducing proteins. The polypeptide is Secreted RxLR effector protein 54 (Plasmopara viticola (Downy mildew of grapevine)).